We begin with the raw amino-acid sequence, 112 residues long: Tyrosine-protein phosphatase 7 (112 aa).

A Tyrosine-protein phosphatase domain is found at 1-112 (NNVTIIVMIT…SSPESGPIVV (112 aa)). Asp82 contacts substrate.

The protein belongs to the protein-tyrosine phosphatase family.

It carries out the reaction O-phospho-L-tyrosyl-[protein] + H2O = L-tyrosyl-[protein] + phosphate. The protein is Tyrosine-protein phosphatase 7 (STY-7) of Styela plicata (Wrinkled sea squirt).